Reading from the N-terminus, the 402-residue chain is Alkane 1-monooxygenase (402 aa).

4 consecutive transmembrane segments (helical) span residues 20–40 (YFWI…WLAN), 42–62 (TGWG…LPLL), 89–109 (VLTY…AWWV), and 114–134 (MSWF…GLAL). Fe cation contacts are provided by histidine 138 and histidine 142. A helical transmembrane segment spans residues 146 to 166 (AFDRWMAKIVLAVVGYGHFFI). Residues histidine 168, histidine 172, and histidine 173 each contribute to the Fe cation site. A helical transmembrane segment spans residues 236–256 (VVLYTLLLAFFGPKMLVFLPI). Positions 312, 315, and 316 each coordinate Fe cation.

Belongs to the fatty acid desaturase type 1 family. AlkB subfamily. Fe(3+) serves as cofactor.

The protein localises to the cell inner membrane. The catalysed reaction is octane + 2 reduced [rubredoxin] + O2 + 2 H(+) = 2 oxidized [rubredoxin] + octan-1-ol + H2O. It participates in hydrocarbon metabolism; alkane degradation. Catalyzes the hydroxylation of n-alkanes in the presence of a NADH-rubredoxin reductase and rubredoxin. This is Alkane 1-monooxygenase (alkB) from Pseudomonas putida (Arthrobacter siderocapsulatus).